The primary structure comprises 172 residues: Crossover junction endodeoxyribonuclease RuvC (172 aa).

Residues Asp12, Glu71, and Asp143 contribute to the active site. Mg(2+) is bound by residues Asp12, Glu71, and Asp143.

It belongs to the RuvC family. In terms of assembly, homodimer which binds Holliday junction (HJ) DNA. The HJ becomes 2-fold symmetrical on binding to RuvC with unstacked arms; it has a different conformation from HJ DNA in complex with RuvA. In the full resolvosome a probable DNA-RuvA(4)-RuvB(12)-RuvC(2) complex forms which resolves the HJ. Mg(2+) is required as a cofactor.

It is found in the cytoplasm. It catalyses the reaction Endonucleolytic cleavage at a junction such as a reciprocal single-stranded crossover between two homologous DNA duplexes (Holliday junction).. In terms of biological role, the RuvA-RuvB-RuvC complex processes Holliday junction (HJ) DNA during genetic recombination and DNA repair. Endonuclease that resolves HJ intermediates. Cleaves cruciform DNA by making single-stranded nicks across the HJ at symmetrical positions within the homologous arms, yielding a 5'-phosphate and a 3'-hydroxyl group; requires a central core of homology in the junction. The consensus cleavage sequence is 5'-(A/T)TT(C/G)-3'. Cleavage occurs on the 3'-side of the TT dinucleotide at the point of strand exchange. HJ branch migration catalyzed by RuvA-RuvB allows RuvC to scan DNA until it finds its consensus sequence, where it cleaves and resolves the cruciform DNA. The protein is Crossover junction endodeoxyribonuclease RuvC of Coxiella burnetii (strain CbuG_Q212) (Coxiella burnetii (strain Q212)).